Consider the following 455-residue polypeptide: Kynurenine 3-monooxygenase (455 aa).

The protein belongs to the aromatic-ring hydroxylase family. KMO subfamily. FAD is required as a cofactor.

The catalysed reaction is L-kynurenine + NADPH + O2 + H(+) = 3-hydroxy-L-kynurenine + NADP(+) + H2O. Its pathway is cofactor biosynthesis; NAD(+) biosynthesis; quinolinate from L-kynurenine: step 1/3. Functionally, catalyzes the hydroxylation of L-kynurenine (L-Kyn) to form 3-hydroxy-L-kynurenine (L-3OHKyn). Required for synthesis of quinolinic acid. This chain is Kynurenine 3-monooxygenase, found in Xanthomonas oryzae pv. oryzae (strain KACC10331 / KXO85).